The primary structure comprises 201 residues: Peptidyl-tRNA hydrolase (201 aa).

Tyrosine 14 lines the tRNA pocket. Histidine 19 (proton acceptor) is an active-site residue. The tRNA site is built by tyrosine 64, asparagine 66, and asparagine 112.

The protein belongs to the PTH family. Monomer.

It localises to the cytoplasm. The enzyme catalyses an N-acyl-L-alpha-aminoacyl-tRNA + H2O = an N-acyl-L-amino acid + a tRNA + H(+). Hydrolyzes ribosome-free peptidyl-tRNAs (with 1 or more amino acids incorporated), which drop off the ribosome during protein synthesis, or as a result of ribosome stalling. Its function is as follows. Catalyzes the release of premature peptidyl moieties from peptidyl-tRNA molecules trapped in stalled 50S ribosomal subunits, and thus maintains levels of free tRNAs and 50S ribosomes. This chain is Peptidyl-tRNA hydrolase, found in Afipia carboxidovorans (strain ATCC 49405 / DSM 1227 / KCTC 32145 / OM5) (Oligotropha carboxidovorans).